Here is a 203-residue protein sequence, read N- to C-terminus: Glycerol-3-phosphate acyltransferase 1 (203 aa).

A run of 6 helical transmembrane segments spans residues 2 to 22, 52 to 72, 82 to 102, 117 to 137, 150 to 168, and 170 to 190; these read LNFF…SHII, GFPA…FFVW, VIAF…FLKF, VLTK…FSIL, EDAF…YTMW, and VFNG…IVFY.

It belongs to the PlsY family. Probably interacts with PlsX.

It localises to the cell inner membrane. It catalyses the reaction an acyl phosphate + sn-glycerol 3-phosphate = a 1-acyl-sn-glycero-3-phosphate + phosphate. It participates in lipid metabolism; phospholipid metabolism. Functionally, catalyzes the transfer of an acyl group from acyl-phosphate (acyl-PO(4)) to glycerol-3-phosphate (G3P) to form lysophosphatidic acid (LPA). This enzyme utilizes acyl-phosphate as fatty acyl donor, but not acyl-CoA or acyl-ACP. This is Glycerol-3-phosphate acyltransferase 1 from Thermotoga maritima (strain ATCC 43589 / DSM 3109 / JCM 10099 / NBRC 100826 / MSB8).